A 280-amino-acid polypeptide reads, in one-letter code: Fructose-1,6-bisphosphatase/inositol-1-monophosphatase (280 aa).

Positions 73, 94, 96, and 97 each coordinate Mg(2+). Substrate is bound by residues 97 to 99 (DGT), Arg195, Val200, and Arg219. Asp226 is a binding site for Mg(2+).

The protein belongs to the inositol monophosphatase superfamily. FBPase class 4 family. Mg(2+) is required as a cofactor.

The enzyme catalyses beta-D-fructose 1,6-bisphosphate + H2O = beta-D-fructose 6-phosphate + phosphate. It catalyses the reaction a myo-inositol phosphate + H2O = myo-inositol + phosphate. Phosphatase with broad specificity; it can dephosphorylate fructose 1,6-bisphosphate, and both D and L isomers of inositol-1-phosphate (I-1-P). In Methanothermobacter thermautotrophicus (strain ATCC 29096 / DSM 1053 / JCM 10044 / NBRC 100330 / Delta H) (Methanobacterium thermoautotrophicum), this protein is Fructose-1,6-bisphosphatase/inositol-1-monophosphatase (suhB).